A 334-amino-acid polypeptide reads, in one-letter code: MKQHIGYLGMGIWGFCLASLLANKGYPVVAWSRNPDLIKQLQEERRHPLAPNVVISPNLSFTTDMKEAIHNAFMIVEGVTSAGIRPVAEQLKQITDLSVPFVITSKGIEQNTGLLLSEIMLEVLGDSVTPYLGYLSGPSIAKEVLNGSPCSVVVSAYDSQTLKQIHEAFSLPTFRVYPNTDIKGAALGGALKNVIAIACGIAEGLSFGNNAKAGLVTRGLHEMRKLAAIMDCKPETLNGLAGLGDLCVTCFSESSRNLRFGHLLAQGLTFEQAKAKIGMVVEGAYTALSAYQVAKHHKIDMPITTGIYRVLYENLDLKEGIALLLQRNTKEEFL.

NADPH-binding residues include Trp13, Arg33, and Lys106. 3 residues coordinate sn-glycerol 3-phosphate: Lys106, Gly137, and Ser139. Ala141 provides a ligand contact to NADPH. Residues Lys192, Asp245, Ser255, Arg256, and Asn257 each coordinate sn-glycerol 3-phosphate. The Proton acceptor role is filled by Lys192. Arg256 is an NADPH binding site. Residues Val280 and Glu282 each contribute to the NADPH site.

This sequence belongs to the NAD-dependent glycerol-3-phosphate dehydrogenase family.

It localises to the cytoplasm. It catalyses the reaction sn-glycerol 3-phosphate + NAD(+) = dihydroxyacetone phosphate + NADH + H(+). It carries out the reaction sn-glycerol 3-phosphate + NADP(+) = dihydroxyacetone phosphate + NADPH + H(+). It functions in the pathway membrane lipid metabolism; glycerophospholipid metabolism. In terms of biological role, catalyzes the reduction of the glycolytic intermediate dihydroxyacetone phosphate (DHAP) to sn-glycerol 3-phosphate (G3P), the key precursor for phospholipid synthesis. The sequence is that of Glycerol-3-phosphate dehydrogenase [NAD(P)+] from Chlamydia pneumoniae (Chlamydophila pneumoniae).